The chain runs to 477 residues: Ankyrin repeat, SAM and basic leucine zipper domain-containing protein 1 (477 aa).

The interval 1-24 (MAASSLWGPAVAGGGESSESEDDG) is disordered. Ser17, Ser18, and Ser20 each carry phosphoserine. ANK repeat units lie at residues 45 to 74 (EKNE…SVDS), 78 to 107 (YGWT…NASF), 110 to 144 (DKQT…DPNV), 148 to 177 (RQMT…EVNA), 181 to 210 (NGYT…NKML), and 214 to 243 (DGKT…PLEG). The SAM domain occupies 272–334 (SYTAFGELDL…KILSALKELM (63 aa)).

In terms of assembly, interacts with DDX4, PIWIL1, RANBP9 and TDRD1.

It is found in the cytoplasm. Its function is as follows. Plays a central role during spermatogenesis by repressing transposable elements and preventing their mobilization, which is essential for the germline integrity. Acts via the piRNA metabolic process, which mediates the repression of transposable elements during meiosis by forming complexes composed of piRNAs and Piwi proteins and governs the methylation and subsequent repression of transposons. Its association with pi-bodies suggests a participation in the primary piRNAs metabolic process. Required prior to the pachytene stage to facilitate the production of multiple types of piRNAs, including those associated with repeats involved in the regulation of retrotransposons. May act by mediating protein-protein interactions during germ cell maturation. The chain is Ankyrin repeat, SAM and basic leucine zipper domain-containing protein 1 (ASZ1) from Echinops telfairi (Lesser hedgehog tenrec).